Here is a 379-residue protein sequence, read N- to C-terminus: Putative 2-hydroxyacid dehydrogenase YGL185C (379 aa).

Residues 207–208 (SI), 291–293 (LGR), and aspartate 317 contribute to the NAD(+) site. Residue arginine 293 is part of the active site. Residue glutamate 322 is part of the active site. Histidine 341 acts as the Proton donor in catalysis. 341 to 344 (HLGS) contacts NAD(+).

This sequence belongs to the D-isomer specific 2-hydroxyacid dehydrogenase family.

In Saccharomyces cerevisiae (strain ATCC 204508 / S288c) (Baker's yeast), this protein is Putative 2-hydroxyacid dehydrogenase YGL185C.